The chain runs to 267 residues: UDP-glucose:undecaprenyl-phosphate glucose-1-phosphate transferase (267 aa).

Residues Val83 to Ile103 traverse the membrane as a helical segment.

Belongs to the bacterial sugar transferase family.

It is found in the cell membrane. It catalyses the reaction di-trans,octa-cis-undecaprenyl phosphate + UDP-alpha-D-glucose = alpha-D-glucosyl di-trans,octa-cis-undecaprenyl diphosphate + UMP. Its function is as follows. Is likely the initiating enzyme for holdfast polysaccharide synthesis. Catalyzes the transfer of the glucose-1-phosphate moiety from UDP-Glc onto the carrier lipid undecaprenyl phosphate (C55-P), forming a phosphoanhydride bond yielding to glucosyl-pyrophosphoryl-undecaprenol (Glc-PP-C55). Also possesses a weak galactose-1-P transferase activity. The polypeptide is UDP-glucose:undecaprenyl-phosphate glucose-1-phosphate transferase (pssY) (Caulobacter vibrioides (strain ATCC 19089 / CIP 103742 / CB 15) (Caulobacter crescentus)).